A 258-amino-acid chain; its full sequence is Trans-aconitate 2-methyltransferase (258 aa).

It belongs to the methyltransferase superfamily. Tam family.

It localises to the cytoplasm. The catalysed reaction is trans-aconitate + S-adenosyl-L-methionine = (E)-3-(methoxycarbonyl)pent-2-enedioate + S-adenosyl-L-homocysteine. Catalyzes the S-adenosylmethionine monomethyl esterification of trans-aconitate. In Yersinia pestis bv. Antiqua (strain Antiqua), this protein is Trans-aconitate 2-methyltransferase.